The sequence spans 367 residues: Cell division protein FtsZ (367 aa).

GTP is bound by residues 17 to 21 (GGGSN), 104 to 106 (GTG), glutamate 135, lysine 139, and aspartate 183.

It belongs to the FtsZ family. Homodimer. Polymerizes to form a dynamic ring structure in a strictly GTP-dependent manner. Interacts directly with several other division proteins.

Its subcellular location is the cytoplasm. In terms of biological role, essential cell division protein that forms a contractile ring structure (Z ring) at the future cell division site. The regulation of the ring assembly controls the timing and the location of cell division. One of the functions of the FtsZ ring is to recruit other cell division proteins to the septum to produce a new cell wall between the dividing cells. Binds GTP and shows GTPase activity. This Aquifex aeolicus (strain VF5) protein is Cell division protein FtsZ.